The sequence spans 104 residues: L-rhamnose mutarotase (104 aa).

Tyr18 contacts substrate. Catalysis depends on His22, which acts as the Proton donor. Substrate-binding positions include Tyr41 and 76-77 (WW).

This sequence belongs to the rhamnose mutarotase family. As to quaternary structure, homodimer.

The protein resides in the cytoplasm. It catalyses the reaction alpha-L-rhamnose = beta-L-rhamnose. The protein operates within carbohydrate metabolism; L-rhamnose metabolism. Functionally, involved in the anomeric conversion of L-rhamnose. The polypeptide is L-rhamnose mutarotase (Sinorhizobium fredii (strain NBRC 101917 / NGR234)).